A 267-amino-acid chain; its full sequence is Formamidopyrimidine-DNA glycosylase (267 aa).

The active-site Schiff-base intermediate with DNA is the P2. Residue E3 is the Proton donor of the active site. K58 serves as the catalytic Proton donor; for beta-elimination activity. Residues H91, R110, and R152 each contribute to the DNA site. Residues 233–267 (DVYGRGHGTCTSCGGALEAVRLGNRSTVFCPRCQQ) form an FPG-type zinc finger. Catalysis depends on R257, which acts as the Proton donor; for delta-elimination activity.

Belongs to the FPG family. In terms of assembly, monomer. Requires Zn(2+) as cofactor.

It carries out the reaction Hydrolysis of DNA containing ring-opened 7-methylguanine residues, releasing 2,6-diamino-4-hydroxy-5-(N-methyl)formamidopyrimidine.. The enzyme catalyses 2'-deoxyribonucleotide-(2'-deoxyribose 5'-phosphate)-2'-deoxyribonucleotide-DNA = a 3'-end 2'-deoxyribonucleotide-(2,3-dehydro-2,3-deoxyribose 5'-phosphate)-DNA + a 5'-end 5'-phospho-2'-deoxyribonucleoside-DNA + H(+). Functionally, involved in base excision repair of DNA damaged by oxidation or by mutagenic agents. Acts as a DNA glycosylase that recognizes and removes damaged bases. Has a preference for oxidized purines, such as 7,8-dihydro-8-oxoguanine (8-oxoG). Has AP (apurinic/apyrimidinic) lyase activity and introduces nicks in the DNA strand. Cleaves the DNA backbone by beta-delta elimination to generate a single-strand break at the site of the removed base with both 3'- and 5'-phosphates. This is Formamidopyrimidine-DNA glycosylase from Pelobacter propionicus (strain DSM 2379 / NBRC 103807 / OttBd1).